The sequence spans 393 residues: RNA polymerase II holoenzyme cyclin-like subunit (393 aa).

The 96-residue stretch at 51-146 folds into the Cyclin N-terminal domain; sequence ICKRLNLRQR…LLEEMEFDMV (96 aa).

It belongs to the cyclin family. Cyclin C subfamily. In terms of assembly, component of the SRB8-11 complex, a regulatory module of the Mediator complex.

Its subcellular location is the nucleus. Component of the SRB8-11 complex. The SRB8-11 complex is a regulatory module of the Mediator complex which is itself involved in regulation of basal and activated RNA polymerase II-dependent transcription. The SRB8-11 complex may be involved in the transcriptional repression of a subset of genes regulated by Mediator. It may inhibit the association of the Mediator complex with RNA polymerase II to form the holoenzyme complex. The SRB8-11 complex phosphorylates the C-terminal domain (CTD) of the largest subunit of RNA polymerase II. In Mycosarcoma maydis (Corn smut fungus), this protein is RNA polymerase II holoenzyme cyclin-like subunit (SSN8).